We begin with the raw amino-acid sequence, 478 residues long: Zinc metalloproteinase/disintegrin ussurin (478 aa).

Residues 1 to 20 (MIQVLLVTICLAAFPYQGSS) form the signal peptide. The propeptide occupies 21 to 190 (IILESGNVND…KKASPLVVTT (170 aa)). The Peptidase M12B domain maps to 193–389 (RYVELVVVAD…RNPQCILNKP (197 aa)). The Ca(2+) site is built by Glu196 and Asp280. 3 disulfide bridges follow: Cys304–Cys384, Cys344–Cys368, and Cys346–Cys351. His329 is a binding site for Zn(2+). Glu330 is an active-site residue. Residues His333 and His339 each coordinate Zn(2+). Ca(2+) contacts are provided by Cys384 and Asn387. Positions 390–413 (LRTDIVSTPVSGNELLEAGEECDC) are excised as a propeptide. The Disintegrin domain maps to 397–478 (TPVSGNELLE…AGCPRNPFHA (82 aa)). 6 cysteine pairs are disulfide-bonded: Cys411-Cys426, Cys413-Cys421, Cys420-Cys443, Cys434-Cys440, Cys439-Cys464, and Cys452-Cys471. A Cell attachment site motif is present at residues 456 to 458 (RGD).

This sequence belongs to the venom metalloproteinase (M12B) family. P-II subfamily. P-IIa sub-subfamily. As to quaternary structure, monomer. The cofactor is Zn(2+). In terms of tissue distribution, expressed by the venom gland.

It localises to the secreted. In terms of biological role, impairs hemostasis in the envenomed animal. Functionally, inhibits platelet aggregation induced by ADP, thrombin, platelet-activating factor and collagen. Acts by inhibiting fibrinogen interaction with platelet receptors GPIIb/GPIIIa (ITGA2B/ITGB3). This Gloydius ussuriensis (Ussuri mamushi) protein is Zinc metalloproteinase/disintegrin ussurin.